Reading from the N-terminus, the 413-residue chain is Multifunctional CCA protein (413 aa).

Residues Gly-8 and Arg-11 each coordinate ATP. The CTP site is built by Gly-8 and Arg-11. Mg(2+)-binding residues include Asp-21 and Asp-23. ATP contacts are provided by Arg-91, Arg-137, and Arg-140. The CTP site is built by Arg-91, Arg-137, and Arg-140. The HD domain maps to 228–329; that stretch reads TGIHTLMVLE…VKIFDKADLW (102 aa).

Belongs to the tRNA nucleotidyltransferase/poly(A) polymerase family. Bacterial CCA-adding enzyme type 1 subfamily. Monomer. Can also form homodimers and oligomers. Requires Mg(2+) as cofactor. Ni(2+) is required as a cofactor.

It carries out the reaction a tRNA precursor + 2 CTP + ATP = a tRNA with a 3' CCA end + 3 diphosphate. The enzyme catalyses a tRNA with a 3' CCA end + 2 CTP + ATP = a tRNA with a 3' CCACCA end + 3 diphosphate. Catalyzes the addition and repair of the essential 3'-terminal CCA sequence in tRNAs without using a nucleic acid template. Adds these three nucleotides in the order of C, C, and A to the tRNA nucleotide-73, using CTP and ATP as substrates and producing inorganic pyrophosphate. tRNA 3'-terminal CCA addition is required both for tRNA processing and repair. Also involved in tRNA surveillance by mediating tandem CCA addition to generate a CCACCA at the 3' terminus of unstable tRNAs. While stable tRNAs receive only 3'-terminal CCA, unstable tRNAs are marked with CCACCA and rapidly degraded. The polypeptide is Multifunctional CCA protein (Shewanella sediminis (strain HAW-EB3)).